A 97-amino-acid polypeptide reads, in one-letter code: Small ribosomal subunit protein bS6 (97 aa).

This sequence belongs to the bacterial ribosomal protein bS6 family.

In terms of biological role, binds together with bS18 to 16S ribosomal RNA. This is Small ribosomal subunit protein bS6 from Bifidobacterium longum (strain NCC 2705).